Reading from the N-terminus, the 364-residue chain is E3 ubiquitin-protein ligase rnf146 (364 aa).

The disordered stretch occupies residues 18–37 (KKVSGEAVPEGSGSPSSPSL). Low complexity predominate over residues 22 to 34 (GEAVPEGSGSPSS). An RING-type zinc finger spans residues 42–80 (CPICLQSCVHPVRLPCRHIFCFLCVKGASWHSKRCALCR). A WWE domain is found at 102-178 (SATGGCGTGS…EHGRRRRMKR (77 aa)). A glycoprotein contacts are provided by Tyr118, Arg121, Trp125, Tyr155, Gln164, Arg174, and Lys186. Disordered regions lie at residues 217–262 (AAAE…PASS) and 279–364 (NEQE…VTKV). 2 stretches are compositionally biased toward acidic residues: residues 281–295 (QEPE…DDSA) and 308–322 (TSDD…DENE).

Its subcellular location is the cytoplasm. The protein resides in the cytosol. It is found in the nucleus. It catalyses the reaction S-ubiquitinyl-[E2 ubiquitin-conjugating enzyme]-L-cysteine + [acceptor protein]-L-lysine = [E2 ubiquitin-conjugating enzyme]-L-cysteine + N(6)-ubiquitinyl-[acceptor protein]-L-lysine.. It functions in the pathway protein modification; protein ubiquitination. Functionally, E3 ubiquitin-protein ligase that specifically binds poly-ADP-ribosylated proteins and mediates their ubiquitination and subsequent degradation. May regulate many important biological processes, such as cell survival and DNA damage response. Acts as an activator of the Wnt signaling pathway by mediating the ubiquitination of poly-ADP-ribosylated proteins. Neuroprotective protein. Protects against cell death induced by DNA damaging agents and rescues cells from G1 arrest. Promotes cell survival after gamma-irradiation. Facilitates DNA repair. The polypeptide is E3 ubiquitin-protein ligase rnf146 (rnf146) (Danio rerio (Zebrafish)).